A 393-amino-acid polypeptide reads, in one-letter code: Cysteine protease ATG4B (393 aa).

Met1 carries the post-translational modification N-acetylmethionine. Ser34 bears the Phosphoserine; by PKB/AKT1 and PKB/AKT2 mark. Cys74 acts as the Nucleophile in catalysis. Position 189 is an S-nitrosocysteine (Cys189). Catalysis depends on residues Asp278 and His280. S-nitrosocysteine occurs at positions 292 and 301. Cys292 and Cys361 form a disulfide bridge. A Phosphoserine; by ULK1 modification is found at Ser316. At Ser383 the chain carries Phosphoserine; by STK26. The short motif at 388-391 (FEIL) is the LIR element. The residue at position 392 (Ser392) is a Phosphoserine.

This sequence belongs to the peptidase C54 family. Interacts with PFKP; promoting phosphorylation of ATG4B at Ser-34. Interacts with GBP7. Post-translationally, phosphorylation at Ser-383 and Ser-392 promotes autophagy by increasing protein delipidation activity without affecting proteolytic activation of ATG8 proteins. Phosphorylation at Ser-316 by ULK1 inhibits autophagy by decreasing both proteolytic activation and delipidation activities. Phosphorylation at Ser-316 is dephosphorylated by protein phosphatase 2A (PP2A). Phosphorylation at Ser-34 by AKT2 promotes its hydrolase activity, leading to increased proteolytic activation and delipidation of ATG8 family proteins. Phosphorylation at Ser-34 by AKT1 promotes mitochondrial localization and inhibition of the F1F0-ATP synthase activity, leading to elevation of mitochondrial reactive oxygen species (ROS). In terms of processing, ubiquitinated by RNF5, leading to its degradation by the proteasome. S-nitrosylation at Cys-189 and Cys-292 in response to high glucose decreases both proteolytic activation and delipidation activities. Post-translationally, O-glycosylated by OGT, leading to increase protease activity, thereby promoting the proteolytic activation of ATG8 family proteins. In terms of processing, forms reversible intrachain disulfide bonds in response to oxidative stress. Forms interchain disulfide bonds, leading to formation of homooligomers in response to oxidation.

Its subcellular location is the cytoplasm. It localises to the cytosol. It is found in the cytoplasmic vesicle. The protein localises to the autophagosome. The protein resides in the endoplasmic reticulum. Its subcellular location is the mitochondrion. It carries out the reaction [protein]-C-terminal L-amino acid-glycyl-phosphatidylethanolamide + H2O = [protein]-C-terminal L-amino acid-glycine + a 1,2-diacyl-sn-glycero-3-phosphoethanolamine. The enzyme catalyses [protein]-C-terminal L-amino acid-glycyl-phosphatidylserine + H2O = [protein]-C-terminal L-amino acid-glycine + a 1,2-diacyl-sn-glycero-3-phospho-L-serine. Its activity is regulated as follows. Inhibited by N-ethylmaleimide. Redox-regulated during autophagy since reducing conditions activate ATG4A whereas an oxidizing environment such as the presence of H(2)O(2) inhibits its activity. The cysteine protease activity compounds is inhibited by styrylquinoline compounds 4-28 and LV-320. In terms of biological role, cysteine protease that plays a key role in autophagy by mediating both proteolytic activation and delipidation of ATG8 family proteins. Required for canonical autophagy (macroautophagy), non-canonical autophagy as well as for mitophagy. The protease activity is required for proteolytic activation of ATG8 family proteins: cleaves the C-terminal amino acid of ATG8 proteins MAP1LC3A, MAP1LC3B, MAP1LC3C, GABARAPL1, GABARAPL2 and GABARAP, to reveal a C-terminal glycine. Exposure of the glycine at the C-terminus is essential for ATG8 proteins conjugation to phosphatidylethanolamine (PE) and insertion to membranes, which is necessary for autophagy. Protease activity is also required to counteract formation of high-molecular weight conjugates of ATG8 proteins (ATG8ylation): acts as a deubiquitinating-like enzyme that removes ATG8 conjugated to other proteins, such as ATG3. In addition to the protease activity, also mediates delipidation of ATG8 family proteins. Catalyzes delipidation of PE-conjugated forms of ATG8 proteins during macroautophagy. Also involved in non-canonical autophagy, a parallel pathway involving conjugation of ATG8 proteins to single membranes at endolysosomal compartments, by catalyzing delipidation of ATG8 proteins conjugated to phosphatidylserine (PS). Compared to other members of the family (ATG4A, ATG4C or ATG4C), constitutes the major protein for proteolytic activation of ATG8 proteins, while it displays weaker delipidation activity than other ATG4 paralogs. Involved in phagophore growth during mitophagy independently of its protease activity and of ATG8 proteins: acts by regulating ATG9A trafficking to mitochondria and promoting phagophore-endoplasmic reticulum contacts during the lipid transfer phase of mitophagy. The protein is Cysteine protease ATG4B of Homo sapiens (Human).